The sequence spans 695 residues: Follicle-stimulating hormone receptor (695 aa).

The N-terminal stretch at 1-17 is a signal peptide; it reads MALFLVALLAFLSLGSG. Intrachain disulfides connect C18–C25 and C23–C32. Residues 18–46 form the LRRNT domain; the sequence is CHHRLCHCSNGVFLCQDSKVTEMPSDLPR. The Extracellular segment spans residues 18–366; sequence CHHRLCHCSN…EDIMGYDILR (349 aa). 9 LRR repeats span residues 48–70, 71–93, 96–118, 121–142, 143–167, 171–192, 194–216, 219–239, and 240–262; these read AVEL…SGFG, DLEK…VFSN, KLHE…AFQN, NLRY…HKIQ, SLQK…SFMG, ESMI…AFNG, QLDE…VFQG, GPVI…YGLE, and NLKK…EKFV. N-linked (GlcNAc...) asparagine glycans are attached at residues N191 and N199. 4 disulfides stabilise this stretch: C275–C346, C276–C292, C276–C356, and C292–C338. A glycan (N-linked (GlcNAc...) asparagine) is linked at N293. Y335 carries the post-translational modification Sulfotyrosine. A helical transmembrane segment spans residues 367-387; sequence VLIWFISILAITGNILVLVIL. The Cytoplasmic portion of the chain corresponds to 388–398; that stretch reads ITSQYKLTVPR. The helical transmembrane segment at 399-421 threads the bilayer; that stretch reads FLMCNLAFADLCIGIYLLLIASV. Residues 422–443 lie on the Extracellular side of the membrane; sequence DVHTKSQYHNYAIDWQTGAGCD. The cysteines at positions 442 and 517 are disulfide-linked. A helical transmembrane segment spans residues 444-465; the sequence is AAGFFTVFASELSVYTLTAITL. Residues 466–485 are Cytoplasmic-facing; the sequence is ERWHTITHAMQLECKVHVRH. Residues 486-508 traverse the membrane as a helical segment; the sequence is AASIMLVGWVFAFAVALFPIFGI. The Extracellular portion of the chain corresponds to 509 to 528; it reads SSYMKVSICLPMDIDSPLSQ. Residues 529–550 traverse the membrane as a helical segment; that stretch reads LYVMSLLVLNVLAFVVICGCYT. The Cytoplasmic portion of the chain corresponds to 551–573; the sequence is HIYLTVRNPNITSSSSDTKIAKR. The helical transmembrane segment at 574–597 threads the bilayer; sequence MAMLIFTDFLCMAPISFFAISASL. The Extracellular segment spans residues 598–608; sequence KVPLITVSKSK. A helical transmembrane segment spans residues 609-630; sequence ILLVLFYPINSCANPFLYAIFT. Over 631 to 695 the chain is Cytoplasmic; sequence RNFRRDFFIL…LIPLRHLAKN (65 aa).

This sequence belongs to the G-protein coupled receptor 1 family. FSH/LSH/TSH subfamily. Homotrimer. Functions as a homotrimer binding the FSH hormone heterodimer composed of CGA and FSHB. Interacts with ARRB2. Interacts with APPL2; interaction is independent of follicle stimulating hormone stimulation. In terms of processing, N-glycosylated; indirectly required for FSH-binding, possibly via a conformational change that allows high affinity binding of hormone. Sulfated. Isoform FSH-R3 is expressed in ovary and testis, but not in kidney (at protein level).

The protein localises to the cell membrane. Its function is as follows. G protein-coupled receptor for follitropin, the follicle-stimulating hormone. The activity of isoform FSH-R1 is mediated by G proteins which activate adenylate cyclase. Isoform FSH-R2 and isoform FSH-R3 also bind FSH, but this does not result in activation of adenylate cyclase. Isoform FSH-R3 may be involved in calcium signaling. Through cAMP production activates the downstream PI3K-AKT and ERK1/ERK2 signaling pathways. In Ovis aries (Sheep), this protein is Follicle-stimulating hormone receptor (FSHR).